We begin with the raw amino-acid sequence, 211 residues long: DNA-directed RNA polymerases I, II, and III subunit RPABC1 (211 aa).

This sequence belongs to the archaeal Rpo5/eukaryotic RPB5 RNA polymerase subunit family. As to quaternary structure, component of the RNA polymerase I (Pol I), RNA polymerase II (Pol II) and RNA polymerase III (Pol III) complexes consisting of at least 13, 12 and 17 subunits, respectively. In RNA Pol II, this subunit is present in 2-fold molar excess over the other subunits.

It localises to the nucleus. Functionally, DNA-dependent RNA polymerase catalyzes the transcription of DNA into RNA using the four ribonucleoside triphosphates as substrates. Common component of RNA polymerases I, II and III which synthesize ribosomal RNA precursors, mRNA precursors and many functional non-coding RNAs, and small RNAs, such as 5S rRNA and tRNAs, respectively. Pol II is the central component of the basal RNA polymerase II transcription machinery. Pols are composed of mobile elements that move relative to each other. In Pol II, RPB5 is part of the lower jaw surrounding the central large cleft and thought to grab the incoming DNA template. Seems to be the major component in this process. This chain is DNA-directed RNA polymerases I, II, and III subunit RPABC1 (rpb-5), found in Caenorhabditis elegans.